The chain runs to 590 residues: MPPVPIYVKGGVWTNVEDQILKAAVQKYGTHQWSKVASLLQKKTARQSELRWNEYLNPKLNFTEFSKEEDAQLLDLARELPNQWRTIADMMARPAQVCVERYNRLLESEDSGGAALSTGVTDLKAGDINPNAETQMARPDNGDLEDEEKEMLAEARARLLNTQGKKATRKIRERMLEESKRIAELQKRRELKQAGINVAIKKPKKKYGTDIDYNEDIVYEQAPMPGIYDTSTEDRQIKKKFEQFERKVNRKGLDGNKDKPSKKNKDKKRKHDENEHVEKAALGESTTLTDEYKKPKLILSAPGTKQGKVTYKKKLESKRQKLIEAQATGTVLTPKELLPHDSGQEDNERSNIKSGKQLKSRIRKFLVQMFASLPSPKNDFEIVLSEDEKEEDAEIAEYEKEFENERAMNEEDNFIEPPSQNDAPRVSLVAVPLAYSTLPIPEFKNNPQSAIDNKYNLLVANAINKEPHMVPEDTVDFLKEVESRMQHITQGRTSMKIQFKTAMPPTEVLLESIQSKVESIEQLQRKLQHVQPLEQQNNEMCSTLCHHSLPALIEGQRKYYADYYAYRQEIRSLEGRRKRLQAMLNSSSSI.

HTH myb-type domains lie at 1–60 and 63–110; these read MPPV…NPKL and TEFS…ESED. 2 DNA-binding regions (H-T-H motif) span residues 33 to 56 and 84 to 106; these read WSKV…NEYL and WRTI…NRLL. Composition is skewed to basic and acidic residues over residues 244-263, 271-281, and 337-351; these read FERK…PSKK, HDENEHVEKAA, and LLPH…ERSN. Disordered stretches follow at residues 244–286 and 336–355; these read FERK…GEST and ELLP…IKSG. The segment at 460–490 is interaction with PRP19 and self-interaction; sequence ANAINKEPHMVPEDTVDFLKEVESRMQHITQ.

The protein belongs to the CEF1 family. In terms of assembly, belongs to the NTC complex (or PRP19-associated complex), composed of at least CEF1, CLF1, ISY1, NTC20, SNT309, SYF1, SYF2, and PRP19. The NTC complex associates with the spliceosome after the release of the U1 and U4 snRNAs and forms the CWC spliceosome subcomplex (or CEF1-associated complex) reminiscent of a late-stage spliceosome composed also of the U2, U5 and U6 snRNAs and at least BUD13, BUD31, BRR2, CDC40, CUS1, CWC2, CWC15, CWC21, CWC22, CWC23, CWC24, CWC25, CWC27, ECM2, HSH155, IST3, LEA1, MSL1, PRP8, PRP9, PRP11, PRP21, PRP22, PRP45, PRP46, SLU7, SMB1, SMD1, SMD2, SMD3, SMX2, SMX3, SNU114, SPP2, RSE1 and YJU2. Interacts with CLF1, ISY1, NTC20, PRP19, PRP46, SYF1 and SYF2.

The protein resides in the cytoplasm. It is found in the nucleus. In terms of biological role, involved in pre-mRNA splicing and cell cycle control. Required for the binding of the NTC complex (or PRP19-associated complex) components to the spliceosome to mediate conformational rearrangement or to stabilize the structure of the spliceosome after U4 snRNA dissociation, which leads to spliceosome maturation. Its absence leads to an arrest of the cell cycle, possibly due to the inefficient splicing of TUB1. The polypeptide is Pre-mRNA-splicing factor CEF1 (CEF1) (Saccharomyces cerevisiae (strain ATCC 204508 / S288c) (Baker's yeast)).